Consider the following 100-residue polypeptide: Large ribosomal subunit protein uL23 (100 aa).

This sequence belongs to the universal ribosomal protein uL23 family. Part of the 50S ribosomal subunit. Contacts protein L29, and trigger factor when it is bound to the ribosome.

Functionally, one of the early assembly proteins it binds 23S rRNA. One of the proteins that surrounds the polypeptide exit tunnel on the outside of the ribosome. Forms the main docking site for trigger factor binding to the ribosome. This Aeromonas salmonicida (strain A449) protein is Large ribosomal subunit protein uL23.